We begin with the raw amino-acid sequence, 153 residues long: Deoxyuridine 5'-triphosphate nucleotidohydrolase (153 aa).

8 residues coordinate dUMP: serine 75, glycine 88, aspartate 91, tyrosine 94, lysine 99, arginine 143, phenylalanine 148, and glycine 149.

Belongs to the dUTPase family. As to quaternary structure, homotrimer. Requires Mg(2+) as cofactor.

The catalysed reaction is dUTP + H2O = dUMP + diphosphate + H(+). The protein operates within pyrimidine metabolism; dUMP biosynthesis; dUMP from dCTP (dUTP route): step 2/2. Involved in nucleotide metabolism via production of dUMP, the immediate precursor of thymidine nucleotides, and decreases the intracellular concentration of dUTP so that uracil cannot be incorporated into DNA. In Eremothecium gossypii (strain ATCC 10895 / CBS 109.51 / FGSC 9923 / NRRL Y-1056) (Yeast), this protein is Deoxyuridine 5'-triphosphate nucleotidohydrolase (DUT1).